A 208-amino-acid polypeptide reads, in one-letter code: Small ribosomal subunit protein uS4 (208 aa).

Residues 95–157 (RRIDNIVYRA…DSLKKLVRSN (63 aa)) form the S4 RNA-binding domain.

This sequence belongs to the universal ribosomal protein uS4 family. Part of the 30S ribosomal subunit. Contacts protein S5. The interaction surface between S4 and S5 is involved in control of translational fidelity.

Its function is as follows. One of the primary rRNA binding proteins, it binds directly to 16S rRNA where it nucleates assembly of the body of the 30S subunit. With S5 and S12 plays an important role in translational accuracy. The protein is Small ribosomal subunit protein uS4 of Borrelia duttonii (strain Ly).